The chain runs to 422 residues: 3-phosphoshikimate 1-carboxyvinyltransferase (422 aa).

3-phosphoshikimate contacts are provided by lysine 20, serine 21, and arginine 25. Lysine 20 lines the phosphoenolpyruvate pocket. Phosphoenolpyruvate is bound by residues glycine 90 and arginine 118. 3-phosphoshikimate is bound by residues serine 161, serine 162, glutamine 163, serine 189, aspartate 305, and lysine 332. Glutamine 163 lines the phosphoenolpyruvate pocket. The active-site Proton acceptor is the aspartate 305. Residues arginine 336 and arginine 378 each coordinate phosphoenolpyruvate.

The protein belongs to the EPSP synthase family. As to quaternary structure, monomer.

The protein localises to the cytoplasm. It carries out the reaction 3-phosphoshikimate + phosphoenolpyruvate = 5-O-(1-carboxyvinyl)-3-phosphoshikimate + phosphate. Its pathway is metabolic intermediate biosynthesis; chorismate biosynthesis. Its function is as follows. Catalyzes the transfer of the enolpyruvyl moiety of phosphoenolpyruvate (PEP) to the 5-hydroxyl of shikimate-3-phosphate (S3P) to produce enolpyruvyl shikimate-3-phosphate and inorganic phosphate. This Nitrosopumilus maritimus (strain SCM1) protein is 3-phosphoshikimate 1-carboxyvinyltransferase.